The chain runs to 155 residues: Egg-lysin (155 aa).

The first 18 residues, 1–18 (MKLLVLCLFAMMATLAVS), serve as a signal peptide directing secretion.

In terms of assembly, monomer. Homodimer. Molecules associate into dimers and then rapidly dissociate again. Interacts (as a monomer) with the egg vitelline layer protein VERL (via VERL repeats); each VERL chain can bind multiple copies of lysin. In terms of tissue distribution, sperm (at protein level).

The protein localises to the cytoplasmic vesicle. It is found in the secretory vesicle. It localises to the acrosome lumen. Its function is as follows. Creates a 3 um hole in the egg vitelline layer through which the sperm passes. Does not have enzyme activity. Species-specific interaction between the sperm protein lysin and the egg protein VERL exposes a basic surface on lysin that may dissociate the egg vitelline layer via electrostatic repulsion. Plays a role in ensuring species-specific fertilization. In Haliotis corrugata (Pink abalone), this protein is Egg-lysin.